The following is a 187-amino-acid chain: Decorin-binding protein B (187 aa).

An N-terminal signal peptide occupies residues 1–20 (MKIGKLNSIVMVLFFDLLVA).

This sequence belongs to the decorin-binding protein family.

Its function is as follows. Binds to decorin which may mediate the adherence of B.burgdorferi to collagen fibers in skin and other tissues. This chain is Decorin-binding protein B (dbpB), found in Borreliella burgdorferi (strain N40) (Borrelia burgdorferi).